Reading from the N-terminus, the 180-residue chain is Stathmin-3 (180 aa).

Residues C22 and C24 are each lipidated (S-palmitoyl cysteine). In terms of domain architecture, SLD spans 38 to 180 (GDMEVKQLDK…NKEQREEMSG (143 aa)). S50, S60, S65, S68, S72, S73, and S81 each carry phosphoserine. The disordered stretch occupies residues 59–82 (KSPSDLSPESPMLSSPPKKKDTSL). Positions 60–74 (SPSDLSPESPMLSSP) are enriched in low complexity. Residues 76–179 (KKKDTSLEEL…RNKEQREEMS (104 aa)) adopt a coiled-coil conformation.

It belongs to the stathmin family. Interacts with STAT3. Interacts with CLU (secreted form); this interaction may act as an important modulator during neuronal differentiation. Post-translationally, N-terminal palmitoylation promotes specific anchoring to the cytosolic leaflet of Golgi membranes and subsequent vesicular trafficking along dendrites and axons. Neuronal Stathmins are substrates for palmitoyltransferases ZDHHC3, ZDHHC7 and ZDHHC15.

It is found in the golgi apparatus. Its subcellular location is the cell projection. It localises to the growth cone. The protein resides in the axon. The protein localises to the cytoplasm. It is found in the cytosol. Functionally, exhibits microtubule-destabilizing activity, which is antagonized by STAT3. The protein is Stathmin-3 (STMN3) of Macaca fascicularis (Crab-eating macaque).